A 151-amino-acid polypeptide reads, in one-letter code: Large ribosomal subunit protein bL9 (151 aa).

This sequence belongs to the bacterial ribosomal protein bL9 family.

Binds to the 23S rRNA. The chain is Large ribosomal subunit protein bL9 from Prochlorococcus marinus (strain MIT 9215).